We begin with the raw amino-acid sequence, 381 residues long: Queuine tRNA-ribosyltransferase (381 aa).

D92 acts as the Proton acceptor in catalysis. Residues 92 to 96 (DSGGF), D146, Q190, and G217 contribute to the substrate site. The tract at residues 248–254 (GVGRPED) is RNA binding. D267 functions as the Nucleophile in the catalytic mechanism. Residues 272 to 276 (TRNAR) are RNA binding; important for wobble base 34 recognition. Positions 305, 307, 310, and 337 each coordinate Zn(2+).

This sequence belongs to the queuine tRNA-ribosyltransferase family. As to quaternary structure, homodimer. Within each dimer, one monomer is responsible for RNA recognition and catalysis, while the other monomer binds to the replacement base PreQ1. Zn(2+) is required as a cofactor.

It carries out the reaction 7-aminomethyl-7-carbaguanine + guanosine(34) in tRNA = 7-aminomethyl-7-carbaguanosine(34) in tRNA + guanine. It functions in the pathway tRNA modification; tRNA-queuosine biosynthesis. In terms of biological role, catalyzes the base-exchange of a guanine (G) residue with the queuine precursor 7-aminomethyl-7-deazaguanine (PreQ1) at position 34 (anticodon wobble position) in tRNAs with GU(N) anticodons (tRNA-Asp, -Asn, -His and -Tyr). Catalysis occurs through a double-displacement mechanism. The nucleophile active site attacks the C1' of nucleotide 34 to detach the guanine base from the RNA, forming a covalent enzyme-RNA intermediate. The proton acceptor active site deprotonates the incoming PreQ1, allowing a nucleophilic attack on the C1' of the ribose to form the product. After dissociation, two additional enzymatic reactions on the tRNA convert PreQ1 to queuine (Q), resulting in the hypermodified nucleoside queuosine (7-(((4,5-cis-dihydroxy-2-cyclopenten-1-yl)amino)methyl)-7-deazaguanosine). This Xanthomonas axonopodis pv. citri (strain 306) protein is Queuine tRNA-ribosyltransferase.